A 623-amino-acid chain; its full sequence is 1-butanol dehydrogenase (quinone) (623 aa).

An N-terminal signal peptide occupies residues 1 to 28 (MKKSHAKPFALRAIVVATAAALSLPAAA). Residues Asp-40, Thr-43, and Asp-46 each contribute to the Ca(2+) site. Glu-90 serves as a coordination point for pyrroloquinoline quinone. Cys-134 and Cys-135 are oxidised to a cystine. Pyrroloquinoline quinone contacts are provided by residues Arg-140, Thr-184, and 202 to 204 (HGS). Residue Glu-208 coordinates Ca(2+). Residues 235 to 274 (HMGRLNGKDSTPTGDPKAPSWPDDPNSPTGKVEAWSQGGG) are disordered. Ca(2+) contacts are provided by Asn-295 and Asp-345. Asp-345 acts as the Proton acceptor in catalysis. Arg-374 lines the pyrroloquinoline quinone pocket. Residues 420-440 (GKPIEKDNRPPQPKEGADKGE) form a disordered region. Ala-592 lines the pyrroloquinoline quinone pocket.

Belongs to the bacterial PQQ dehydrogenase family. Pyrroloquinoline quinone is required as a cofactor. Requires Ca(2+) as cofactor.

It localises to the periplasm. The catalysed reaction is butan-1-ol + a quinone = butanal + a quinol. Functionally, involved in the metabolism of butane. May function primarily in energy generation. Catalyzes the oxidation of 1-butanol to 1-butanal. Also able to use 2-butanol and butyraldehyde, although the affinity is comparatively low. This is 1-butanol dehydrogenase (quinone) from Thauera butanivorans (strain ATCC 43655 / DSM 2080 / JCM 20651 / CCUG 51053 / NBRC 103042 / IAM 12574 / Bu B1211) (Pseudomonas butanovora).